The following is a 270-amino-acid chain: MTNPMQATRKIISITDQNVVHREDQVAREYPLTIYVNDREFATMVCTQADLEEMVIGFLGSEGLIRFYKQDVASLSIDESRGFAYVSLTKELPTEWQFYSKRMIGSCCGKSRQSFYFHNDAKTAKTSMSRTTMTPEQCFRLMEALQEQSVIFQQTGGVHNAALATPEQMLISRTDIGRHNALDKLYGYCLMNGVPVRDKVLLFSGRISSEVLLKAAKIGVGIMLSKSAPTELALTMAEELNITTAGFIRDGRMNIYTVPERILTPKKEVQ.

Cysteine 108 acts as the Cysteine persulfide intermediate in catalysis. Residue 247–252 participates in Mo-bis(molybdopterin guanine dinucleotide) binding; sequence FIRDGR.

This sequence belongs to the FdhD family.

Its subcellular location is the cytoplasm. Its function is as follows. Required for formate dehydrogenase (FDH) activity. Acts as a sulfur carrier protein that transfers sulfur from IscS to the molybdenum cofactor prior to its insertion into FDH. The protein is Sulfur carrier protein FdhD of Halalkalibacterium halodurans (strain ATCC BAA-125 / DSM 18197 / FERM 7344 / JCM 9153 / C-125) (Bacillus halodurans).